A 153-amino-acid chain; its full sequence is Endoribonuclease YbeY (153 aa).

Zn(2+) contacts are provided by histidine 118, histidine 122, and histidine 128.

This sequence belongs to the endoribonuclease YbeY family. The cofactor is Zn(2+).

It is found in the cytoplasm. Its function is as follows. Single strand-specific metallo-endoribonuclease involved in late-stage 70S ribosome quality control and in maturation of the 3' terminus of the 16S rRNA. The chain is Endoribonuclease YbeY from Staphylococcus haemolyticus (strain JCSC1435).